Here is a 158-residue protein sequence, read N- to C-terminus: C-type lectin BML-2 (158 aa).

Residues 1 to 23 (MGHFTFTGLCLLAMFLSLRGAEC) form the signal peptide. 4 disulfide bridges follow: C26-C37, C54-C154, C61-C156, and C129-C146. The C-type lectin domain maps to 33 to 155 (KNGLCYKVFS…CESLHPFLCQ (123 aa)). The Mannose-binding signature appears at 119–121 (EPN). An N-linked (GlcNAc...) asparagine glycan is attached at N121. Ca(2+)-binding residues include E127, N142, and D143.

This sequence belongs to the true venom lectin family. As to quaternary structure, dimer. Probably non-covalently linked. Expressed by the venom gland.

The protein resides in the secreted. Recombinant C-type lectin BML-2 is able to agglutinate erythrocytes. May be a calcium-dependent lectin. This chain is C-type lectin BML-2, found in Bungarus multicinctus (Many-banded krait).